Here is a 397-residue protein sequence, read N- to C-terminus: Argininosuccinate synthase (397 aa).

8-16 is an ATP binding site; the sequence is AYSGGLDTS. L-citrulline-binding residues include tyrosine 86 and serine 91. ATP is bound at residue glycine 116. L-aspartate-binding residues include threonine 118, asparagine 122, and aspartate 123. Asparagine 122 lines the L-citrulline pocket. L-citrulline is bound by residues arginine 126, serine 175, serine 184, glutamate 260, and tyrosine 272.

It belongs to the argininosuccinate synthase family. Type 1 subfamily. In terms of assembly, homotetramer.

It localises to the cytoplasm. The enzyme catalyses L-citrulline + L-aspartate + ATP = 2-(N(omega)-L-arginino)succinate + AMP + diphosphate + H(+). It participates in amino-acid biosynthesis; L-arginine biosynthesis; L-arginine from L-ornithine and carbamoyl phosphate: step 2/3. The sequence is that of Argininosuccinate synthase from Clostridium botulinum (strain Langeland / NCTC 10281 / Type F).